The primary structure comprises 131 residues: Small ribosomal subunit protein uS8 (131 aa).

It belongs to the universal ribosomal protein uS8 family. As to quaternary structure, part of the 30S ribosomal subunit. Contacts proteins S5 and S12.

One of the primary rRNA binding proteins, it binds directly to 16S rRNA central domain where it helps coordinate assembly of the platform of the 30S subunit. This chain is Small ribosomal subunit protein uS8, found in Polaromonas sp. (strain JS666 / ATCC BAA-500).